The sequence spans 262 residues: Phosphate import ATP-binding protein PstB (262 aa).

The ABC transporter domain occupies 16-257; sequence IDVRNLNFYY…PHRKETEDYI (242 aa). 48–55 lines the ATP pocket; it reads GPSGCGKS.

Belongs to the ABC transporter superfamily. Phosphate importer (TC 3.A.1.7) family. In terms of assembly, the complex is composed of two ATP-binding proteins (PstB), two transmembrane proteins (PstC and PstA) and a solute-binding protein (PstS).

It localises to the cell inner membrane. The catalysed reaction is phosphate(out) + ATP + H2O = ADP + 2 phosphate(in) + H(+). Functionally, part of the ABC transporter complex PstSACB involved in phosphate import. Responsible for energy coupling to the transport system. This chain is Phosphate import ATP-binding protein PstB, found in Cupriavidus metallidurans (strain ATCC 43123 / DSM 2839 / NBRC 102507 / CH34) (Ralstonia metallidurans).